The primary structure comprises 191 residues: Auxin-responsive protein IAA32 (191 aa).

The short motif at 32–36 is the EAR-like (transcriptional repression) element; sequence LGLSL. Residues 98 to 184 form the PB1 domain; that stretch reads YAYVKVNLDG…SVDRMRIARR (87 aa).

The protein belongs to the Aux/IAA family. Homodimers and heterodimers.

It localises to the nucleus. In terms of biological role, aux/IAA proteins are short-lived transcriptional factors that function as repressors of early auxin response genes at low auxin concentrations. Repression is thought to result from the interaction with auxin response factors (ARFs), proteins that bind to the auxin-responsive promoter element (AuxRE). Formation of heterodimers with ARF proteins may alter their ability to modulate early auxin response genes expression. This Arabidopsis thaliana (Mouse-ear cress) protein is Auxin-responsive protein IAA32.